We begin with the raw amino-acid sequence, 336 residues long: Probable magnesium transporter NIPA2 (336 aa).

Residues 1–7 (MEEMSPD) lie on the Extracellular side of the membrane. A helical membrane pass occupies residues 8–28 (NIHGVILAVSSSIFIGSSFII). The Cytoplasmic segment spans residues 29-55 (KKKGLKKAGVSGARAGEGGYGYLYEPW). Residues 56 to 76 (WWAGMITMIVGEIANFAAYAF) traverse the membrane as a helical segment. Over 77–79 (APA) the chain is Extracellular. A helical membrane pass occupies residues 80-100 (ILVTPLGALSIIFSAVLAHFI). At 101-104 (LEEK) the chain is on the cytoplasmic side. Residues 105 to 125 (LHMFGILGCVLCVVGSTTIVL) traverse the membrane as a helical segment. Over 126-145 (HAPHEQGIESVKQVWHLATE) the chain is Extracellular. A helical transmembrane segment spans residues 146–166 (PGFLAYSAVVLVVVLALIFYY). Topologically, residues 167 to 179 (EPRYGKTHMIVYV) are cytoplasmic. The chain crosses the membrane as a helical span at residues 180 to 200 (GICSLMGSLTVMSVKAVAIAI). Topologically, residues 201 to 212 (KLTFSGMNQFKY) are extracellular. Residues 213-233 (FHAWIFIIVVTICCILQINYL) form a helical membrane-spanning segment. Residues 234-244 (NKALDNFNTAV) lie on the Cytoplasmic side of the membrane. The helical transmembrane segment at 245 to 265 (ISPVYYVMFTTFTILASMIMF) threads the bilayer. Residues 266-272 (KDWASQS) are Extracellular-facing. Residues 273 to 293 (GLQIATELCGFVTILSGTFLL) form a helical membrane-spanning segment. Residues 294 to 336 (HKTKDMGNSTSLRGSTSHSPRDTPVFINSGSSRSSNSTRPAIL) lie on the Cytoplasmic side of the membrane. A disordered region spans residues 303 to 336 (TSLRGSTSHSPRDTPVFINSGSSRSSNSTRPAIL). Low complexity predominate over residues 321-330 (NSGSSRSSNS).

The protein belongs to the NIPA (TC 2.A.7) family. Homodimer.

Its subcellular location is the cell membrane. The protein resides in the early endosome. Acts as a Mg(2+) transporter. Can also transport other divalent cations such as Fe(2+), Sr(2+), Ba(2+), Mn(2+) and Co(2+) but to a much less extent than Mg(2+). In Arabidopsis thaliana (Mouse-ear cress), this protein is Probable magnesium transporter NIPA2.